The primary structure comprises 1044 residues: Elongation factor 3A (1044 aa).

The residue at position 2 (serine 2) is an N-acetylserine. Residues 5 to 42 (QQSIKVLEELFQKLSVATADNRHEIASEVASFLNGNII) form an HEAT 1 repeat. Positions 42, 44, and 83 each coordinate ADP. HEAT repeat units follow at residues 86-123 (PYIVQLVPAICTNAGNKDKEIQSVASETLISIVNAVNP), 125-162 (AIKALLPHLTNAIVETNKWQEKIAILAAISAMVDAAKD), 166-203 (LRMPELIPVLSETMWDTKKEVKAAATAAMTKATETVDN), 205-241 (DIERFIPSLIQCIADPTEVPETVHLLGATTFVAEVTP), 242-279 (ATLSIMVPLLSRGLNERETGIKRKSAVIIDNMCKLVED), and 285-323 (PFLGKLLPGLKSNFATIADPEAREVTLRALKTLRRVGNV). 2 positions are modified to N6,N6,N6-trimethyllysine: lysine 187 and lysine 196. Lysine 350 is covalently cross-linked (Glycyl lysine isopeptide (Lys-Gly) (interchain with G-Cter in ubiquitin)). ADP is bound by residues threonine 392, histidine 396, and glutamate 397. The ABC transporter 1 domain maps to 426-641 (DEGEDLCNCE…CPAAKAYEEL (216 aa)). A Glycyl lysine isopeptide (Lys-Gly) (interchain with G-Cter in ubiquitin) cross-link involves residue lysine 636. Serine 642 is subject to Phosphoserine. Residues 667 to 993 (VKVTNMEFQY…AGPRIEKKED (327 aa)) form the ABC transporter 2 domain. Asparagine 703 lines the ADP pocket. Position 789 is an N6,N6,N6-trimethyllysine (lysine 789). Residues glutamate 922, asparagine 925, and histidine 951 each contribute to the ADP site. Threonine 972 carries the post-translational modification Phosphothreonine. Serine 974 carries the phosphoserine modification. The segment at 974 to 1044 (SGHNWVSGQG…DAYVSSDEEF (71 aa)) is disordered. The segment covering 1007–1031 (GGKKKKKLSSAELRKKKKERMKKKK) has biased composition (basic residues). 2 positions are modified to phosphoserine: serine 1039 and serine 1040.

This sequence belongs to the ABC transporter superfamily. ABCF family. EF3 subfamily. In terms of assembly, monomer. Interacts with elongation factor 1A (eEF1A). Interacts through its N-terminus with 18S rRNA. Associates with ribosomes; preferentially binds ribosomes in the post-translocational state (bearing a peptidyl-tRNA in the P-site) in the presence of ATP, suggesting that ATP hydrolysis is required for ribosome dissociation.

The protein resides in the cytoplasm. The protein localises to the cytosol. It catalyses the reaction ATP + H2O = ADP + phosphate + H(+). It participates in protein biosynthesis; polypeptide chain elongation. Inhibited by the translational inhibitors neomycin and alpha-sarcin, which suppress the ATPase activity. Its function is as follows. Ribosome-dependent ATPase that functions in cytoplasmic translation elongation. Required for the ATP-dependent release of deacylated tRNA from the ribosomal E-site during protein biosynthesis. Stimulates the eEF1A-dependent binding of aminoacyl-tRNA to the ribosomal A-site, which has reduced affinity for tRNA as long as the E-site is occupied. Assists translation termination by stimulating the release of nascent protein from the ribosome by release factors. In nutrient-replete conditions, occupies the space on the ribosome bound by GCN1 during amino acid starvation conditions, and therefore indirectly negatively regulates GCN2 kinase activity in replete conditions. This chain is Elongation factor 3A (YEF3), found in Saccharomyces cerevisiae (strain ATCC 204508 / S288c) (Baker's yeast).